Here is a 273-residue protein sequence, read N- to C-terminus: Bis(5'-nucleosyl)-tetraphosphatase, symmetrical (273 aa).

It belongs to the Ap4A hydrolase family.

It catalyses the reaction P(1),P(4)-bis(5'-adenosyl) tetraphosphate + H2O = 2 ADP + 2 H(+). Functionally, hydrolyzes diadenosine 5',5'''-P1,P4-tetraphosphate to yield ADP. This chain is Bis(5'-nucleosyl)-tetraphosphatase, symmetrical, found in Histophilus somni (strain 2336) (Haemophilus somnus).